The sequence spans 457 residues: Metal tolerance protein C4 (457 aa).

The Cytoplasmic segment spans residues 1 to 115 (MQSSHRILSR…IEINDQHSQR (115 aa)). Residues 116–136 (AVTTALWCNFLVFSLKFGVWW) form a helical membrane-spanning segment. The Vacuolar portion of the chain corresponds to 137–141 (TSSSH). Residues 142 to 162 (VIMAEVVHSVADFANQALLAY) form a helical membrane-spanning segment. Residues 163–183 (GLSSSRRAPDALHPYGYSKER) are Cytoplasmic-facing. The chain crosses the membrane as a helical span at residues 184 to 204 (FVWSLISAVGIFCLGSGATIV). The Vacuolar segment spans residues 205-220 (NGVQNLWTSSPPPNME). Residues 221-241 (LAAVVIGGSFLIEGASLLVAI) traverse the membrane as a helical segment. Residues 242–267 (QSVKKGAAQEGMTIRDYIWRGHDPTS) lie on the Cytoplasmic side of the membrane. Residues 268–288 (VAVMTEDGAAVAGLAIAAASL) form a helical membrane-spanning segment. At 289–297 (VAVRMTGNP) the chain is on the vacuolar side. The chain crosses the membrane as a helical span at residues 298 to 318 (IYDPIGSIVVGNLLGMVAIFL). Over 319–457 (IQRNRHALIG…HNPTPTDPSL (139 aa)) the chain is Cytoplasmic.

Belongs to the cation diffusion facilitator (CDF) transporter (TC 2.A.4) family.

It localises to the vacuole membrane. In terms of biological role, involved in sequestration of excess metal in the cytoplasm into vacuoles to maintain metal homeostasis. The protein is Metal tolerance protein C4 (MTPC4) of Arabidopsis thaliana (Mouse-ear cress).